We begin with the raw amino-acid sequence, 493 residues long: Inosine-5'-monophosphate dehydrogenase (493 aa).

CBS domains follow at residues 97–155 and 159–219; these read VIID…NAPI and MTSE…AKDE. Residues aspartate 253 and 303–305 contribute to the NAD(+) site; that span reads GIG. The K(+) site is built by glycine 305 and glycine 307. Position 308 (serine 308) interacts with IMP. A K(+)-binding site is contributed by cysteine 310. The active-site Thioimidate intermediate is cysteine 310. IMP is bound by residues 343–345, 366–367, and 390–394; these read DGG, GS, and YRGMG. Arginine 406 acts as the Proton acceptor in catalysis. Position 421 (glutamate 421) interacts with IMP. K(+)-binding residues include glutamate 475, serine 476, and histidine 477.

Belongs to the IMPDH/GMPR family. In terms of assembly, homotetramer. K(+) serves as cofactor.

It catalyses the reaction IMP + NAD(+) + H2O = XMP + NADH + H(+). It functions in the pathway purine metabolism; XMP biosynthesis via de novo pathway; XMP from IMP: step 1/1. With respect to regulation, mycophenolic acid (MPA) is a non-competitive inhibitor that prevents formation of the closed enzyme conformation by binding to the same site as the amobile flap. In contrast, mizoribine monophosphate (MZP) is a competitive inhibitor that induces the closed conformation. MPA is a potent inhibitor of mammalian IMPDHs but a poor inhibitor of the bacterial enzymes. MZP is a more potent inhibitor of bacterial IMPDH. In terms of biological role, catalyzes the conversion of inosine 5'-phosphate (IMP) to xanthosine 5'-phosphate (XMP), the first committed and rate-limiting step in the de novo synthesis of guanine nucleotides, and therefore plays an important role in the regulation of cell growth. The protein is Inosine-5'-monophosphate dehydrogenase of Streptococcus pyogenes serotype M3 (strain ATCC BAA-595 / MGAS315).